The primary structure comprises 427 residues: Trigger factor (427 aa).

In terms of domain architecture, PPIase FKBP-type spans 165–250 (GDTVVIDFEG…LHEIQEQVPA (86 aa)).

This sequence belongs to the FKBP-type PPIase family. Tig subfamily.

Its subcellular location is the cytoplasm. The catalysed reaction is [protein]-peptidylproline (omega=180) = [protein]-peptidylproline (omega=0). Its function is as follows. Involved in protein export. Acts as a chaperone by maintaining the newly synthesized protein in an open conformation. Functions as a peptidyl-prolyl cis-trans isomerase. The chain is Trigger factor from Sulfurovum sp. (strain NBC37-1).